The primary structure comprises 100 residues: Urease subunit gamma (100 aa).

This sequence belongs to the urease gamma subunit family. In terms of assembly, heterotrimer of UreA (gamma), UreB (beta) and UreC (alpha) subunits. Three heterotrimers associate to form the active enzyme.

It is found in the cytoplasm. The catalysed reaction is urea + 2 H2O + H(+) = hydrogencarbonate + 2 NH4(+). The protein operates within nitrogen metabolism; urea degradation; CO(2) and NH(3) from urea (urease route): step 1/1. The protein is Urease subunit gamma of Kocuria rhizophila (strain ATCC 9341 / DSM 348 / NBRC 103217 / DC2201).